A 363-amino-acid chain; its full sequence is 3-dehydroquinate synthase (363 aa).

NAD(+) contacts are provided by residues 72-77, 130-131, K142, and K151; these read SGEKEK and TT. Zn(2+)-binding residues include E184, H247, and H264.

This sequence belongs to the sugar phosphate cyclases superfamily. Dehydroquinate synthase family. The cofactor is Co(2+). Zn(2+) is required as a cofactor. It depends on NAD(+) as a cofactor.

It localises to the cytoplasm. The enzyme catalyses 7-phospho-2-dehydro-3-deoxy-D-arabino-heptonate = 3-dehydroquinate + phosphate. It participates in metabolic intermediate biosynthesis; chorismate biosynthesis; chorismate from D-erythrose 4-phosphate and phosphoenolpyruvate: step 2/7. Catalyzes the conversion of 3-deoxy-D-arabino-heptulosonate 7-phosphate (DAHP) to dehydroquinate (DHQ). The chain is 3-dehydroquinate synthase from Bacillus thuringiensis subsp. konkukian (strain 97-27).